The chain runs to 226 residues: Small ribosomal subunit protein uS3 (226 aa).

One can recognise a KH type-2 domain in the interval 39–109; the sequence is IYKFFDKFTR…KLDVNLKVLT (71 aa).

The protein belongs to the universal ribosomal protein uS3 family. Part of the 30S ribosomal subunit. Forms a tight complex with proteins S10 and S14.

Binds the lower part of the 30S subunit head. Binds mRNA in the 70S ribosome, positioning it for translation. This Mycoplasmopsis synoviae (strain 53) (Mycoplasma synoviae) protein is Small ribosomal subunit protein uS3.